A 105-amino-acid polypeptide reads, in one-letter code: MEEVGGNGGPARIAECGKIGSGTINSNVVPSVNLPSPSVKPSVTPSVKKPPHVIRSDYSKPREKPAKVAKKPTVKNDKKPKPVAIVAPTGIIKTFKTTPNPNRNL.

Low complexity predominate over residues 31–47; the sequence is SVNLPSPSVKPSVTPSV. The disordered stretch occupies residues 31–80; sequence SVNLPSPSVKPSVTPSVKKPPHVIRSDYSKPREKPAKVAKKPTVKNDKKP. Over residues 54-66 the composition is skewed to basic and acidic residues; it reads IRSDYSKPREKPA.

This is an uncharacterized protein from Caenorhabditis elegans.